The chain runs to 65 residues: UPF0434 protein HS_0657 (65 aa).

This sequence belongs to the UPF0434 family.

This Histophilus somni (strain 129Pt) (Haemophilus somnus) protein is UPF0434 protein HS_0657.